The sequence spans 347 residues: NADH-ubiquinone oxidoreductase chain 2 (347 aa).

Transmembrane regions (helical) follow at residues 1–21 (MNPIIFFMIMLTIILGTTIVM), 25–45 (HWLTVWMGFEMNMLAIIPMLM), 59–79 (YFLTQATASMLLLLAITINLM), 96–116 (IILTIALAMKLGLAPFHFWVP), 148–168 (IINLDLLLMMGLLSVMIGGWG), 178–198 (IMAYSSIAHMGWMVTILIYNP), 200–220 (LTMLNLTIYIMMTLTMFMLLI), 237–257 (MPLITTMMLTTLLSMGGLPPL), 274–294 (NSIILPTFMAITALLNLYFYM), and 326–346 (LSPLMVISTMTLPLTPMMMIL).

The protein belongs to the complex I subunit 2 family. As to quaternary structure, core subunit of respiratory chain NADH dehydrogenase (Complex I) which is composed of 45 different subunits. Interacts with TMEM242.

It is found in the mitochondrion inner membrane. It catalyses the reaction a ubiquinone + NADH + 5 H(+)(in) = a ubiquinol + NAD(+) + 4 H(+)(out). Its function is as follows. Core subunit of the mitochondrial membrane respiratory chain NADH dehydrogenase (Complex I) which catalyzes electron transfer from NADH through the respiratory chain, using ubiquinone as an electron acceptor. Essential for the catalytic activity and assembly of complex I. This Gardnerycteris crenulata (Striped hairy-nosed bat) protein is NADH-ubiquinone oxidoreductase chain 2.